Here is a 423-residue protein sequence, read N- to C-terminus: Serine--tRNA ligase (423 aa).

L-serine is bound at residue 229-231; that stretch reads TAE. 260 to 262 contacts ATP; the sequence is RKE. Glu283 provides a ligand contact to L-serine. ATP is bound at residue 347 to 350; the sequence is EVSS. Ser383 provides a ligand contact to L-serine.

The protein belongs to the class-II aminoacyl-tRNA synthetase family. Type-1 seryl-tRNA synthetase subfamily. As to quaternary structure, homodimer. The tRNA molecule binds across the dimer.

The protein localises to the cytoplasm. The catalysed reaction is tRNA(Ser) + L-serine + ATP = L-seryl-tRNA(Ser) + AMP + diphosphate + H(+). The enzyme catalyses tRNA(Sec) + L-serine + ATP = L-seryl-tRNA(Sec) + AMP + diphosphate + H(+). Its pathway is aminoacyl-tRNA biosynthesis; selenocysteinyl-tRNA(Sec) biosynthesis; L-seryl-tRNA(Sec) from L-serine and tRNA(Sec): step 1/1. Its function is as follows. Catalyzes the attachment of serine to tRNA(Ser). Is also able to aminoacylate tRNA(Sec) with serine, to form the misacylated tRNA L-seryl-tRNA(Sec), which will be further converted into selenocysteinyl-tRNA(Sec). This is Serine--tRNA ligase from Chloroflexus aurantiacus (strain ATCC 29366 / DSM 635 / J-10-fl).